Here is a 363-residue protein sequence, read N- to C-terminus: NAD(P)H-quinone oxidoreductase subunit 1, chloroplastic (363 aa).

A run of 7 helical transmembrane segments spans residues 30–50, 98–118, 129–149, 165–185, 253–273, 303–323, and 336–356; these read LVPI…IVWL, FSIG…VIPF, VGVF…LMSG, AAQS…ISLL, FAFF…FVTI, TTTE…ISIT, and LLNL…LLTT.

Belongs to the complex I subunit 1 family. NDH is composed of at least 16 different subunits, 5 of which are encoded in the nucleus.

Its subcellular location is the plastid. It is found in the chloroplast thylakoid membrane. The enzyme catalyses a plastoquinone + NADH + (n+1) H(+)(in) = a plastoquinol + NAD(+) + n H(+)(out). It carries out the reaction a plastoquinone + NADPH + (n+1) H(+)(in) = a plastoquinol + NADP(+) + n H(+)(out). In terms of biological role, NDH shuttles electrons from NAD(P)H:plastoquinone, via FMN and iron-sulfur (Fe-S) centers, to quinones in the photosynthetic chain and possibly in a chloroplast respiratory chain. The immediate electron acceptor for the enzyme in this species is believed to be plastoquinone. Couples the redox reaction to proton translocation, and thus conserves the redox energy in a proton gradient. This Pelargonium hortorum (Common geranium) protein is NAD(P)H-quinone oxidoreductase subunit 1, chloroplastic.